Consider the following 323-residue polypeptide: MTIAIVIGTHGWAAEQLLKTAEMLLGEQENVGWIDFVPGENAETLIEKYNAQLAKLDTTKGVLFLVDTWGGSPFNAASRIVVDKEHYEVIAGVNIPMLVETLMARDDDPSFDELVALAVETGREGVKALKAKPVEKAAPAPAAAAPKAAPTPAKPMGPNDYMVIGLARIDDRLIHGQVATRWTKETNVSRIIVVSDEVAADTVRKTLLTQVAPPGVTAHVVDVAKMIRVYNNPKYAGERVMLLFTNPTDVERLVEGGVKITSVNVGGMAFRQGKTQVNNAVSVDEKDIEAFKKLNARGIELEVRKVSTDPKLKMMDLISKIDK.

The 123-residue stretch at 2–124 (TIAIVIGTHG…VALAVETGRE (123 aa)) folds into the PTS EIIA type-4 domain. Residue His10 is the Tele-phosphohistidine intermediate; for EIIA activity of the active site. Phosphohistidine; by HPr is present on His10. At Lys55 the chain carries N6-acetyllysine. The hinge stretch occupies residues 137–155 (AAPAPAAAAPKAAPTPAKP). A PTS EIIB type-4 domain is found at 157–320 (GPNDYMVIGL…KLKMMDLISK (164 aa)). The active-site Pros-phosphohistidine intermediate; for EIIB activity is His175. His175 carries the post-translational modification Phosphohistidine; by EIIA. An N6-acetyllysine modification is found at Lys234.

In terms of assembly, homodimer.

It localises to the cytoplasm. Its subcellular location is the cell inner membrane. It catalyses the reaction D-mannose(out) + N(pros)-phospho-L-histidyl-[protein] = D-mannose 6-phosphate(in) + L-histidyl-[protein]. In terms of biological role, the phosphoenolpyruvate-dependent sugar phosphotransferase system (sugar PTS), a major carbohydrate active transport system, catalyzes the phosphorylation of incoming sugar substrates concomitantly with their translocation across the cell membrane. The enzyme II ManXYZ PTS system is involved in mannose transport. In Escherichia coli O157:H7, this protein is PTS system mannose-specific EIIAB component (manX).